The sequence spans 440 residues: Beta-1,3-galactosyl-O-glycosyl-glycoprotein beta-1,6-N-acetylglucosaminyltransferase (440 aa).

Residues 1–9 lie on the Cytoplasmic side of the membrane; the sequence is MKMAGWKKK. A helical; Signal-anchor for type II membrane protein transmembrane segment spans residues 10 to 30; it reads LCPGHHLWALGCYMLLAVVSL. Topologically, residues 31–440 are lumenal; that stretch reads RLSLRFKCDV…RHKAIYGTEL (410 aa). Asparagine 72 and asparagine 108 each carry an N-linked (GlcNAc...) asparagine; by host glycan. 4 disulfides stabilise this stretch: cysteine 73-cysteine 230, cysteine 164-cysteine 384, cysteine 185-cysteine 212, and cysteine 393-cysteine 425.

The protein belongs to the glycosyltransferase 14 family.

It localises to the host Golgi apparatus membrane. It carries out the reaction a 3-O-[beta-D-galactosyl-(1-&gt;3)-N-acetyl-alpha-D-galactosaminyl]-L-seryl-[protein] + UDP-N-acetyl-alpha-D-glucosamine = 3-O-{beta-D-galactosyl-(1-&gt;3)-[N-acetyl-beta-D-glucosaminyl-(1-&gt;6)]-N-acetyl-alpha-D-galactosaminyl}-L-seryl-[protein] + UDP + H(+). It catalyses the reaction a 3-O-[beta-D-galactosyl-(1-&gt;3)-N-acetyl-alpha-D-galactosaminyl]-L-threonyl-[protein] + UDP-N-acetyl-alpha-D-glucosamine = a 3-O-{beta-D-galactosyl-(1-&gt;3)-[N-acetyl-beta-D-glucosaminyl-(1-&gt;6)]-N-acetyl-alpha-D-galactosaminyl}-L-threonyl-[protein] + UDP + H(+). The catalysed reaction is a beta-D-Gal-(1-&gt;4)-beta-D-GlcNAc-(1-&gt;3)-beta-D-Gal-(1-&gt;4)-beta-D-GlcNAc derivative + UDP-N-acetyl-alpha-D-glucosamine = a beta-D-Gal-(1-&gt;4)-beta-D-GlcNAc-(1-&gt;3)-[beta-D-GlcNAc-(1-&gt;6)]-beta-D-Gal-(1-&gt;4)-N-acetyl-beta-D-glucosaminyl derivative + UDP + H(+). The enzyme catalyses 3-O-[N-acetyl-beta-D-glucosaminyl-(1-&gt;3)-N-acetyl-alpha-D-galactosaminyl]-L-seryl-[protein] + UDP-N-acetyl-alpha-D-glucosamine = 3-O-[N-acetyl-beta-D-glucosaminyl-(1-&gt;3)-[N-acetyl-beta-D-glucosaminyl-(1-&gt;6)]-N-acetyl-alpha-D-galactosaminyl]-L-seryl-[protein] + UDP + H(+). It carries out the reaction a 3-O-[N-acetyl-beta-D-glucosaminyl-(1-&gt;3)-N-acetyl-alpha-D-galactosaminyl]-L-threonyl-[protein] + UDP-N-acetyl-alpha-D-glucosamine = 3-O-[N-acetyl-beta-D-glucosaminyl-(1-&gt;3)-[N-acetyl-beta-D-glucosaminyl-(1-&gt;6)]-N-acetyl-alpha-D-galactosaminyl]-L-threonyl-[protein] + UDP + H(+). It functions in the pathway protein modification; protein glycosylation. Non-essential glycosyltransferase that can synthesize all known mucin beta 6 N-acetylglucosaminides. Mediates core 2 and core 4 O-glycan branching, 2 important steps in mucin-type biosynthesis. Has also I-branching enzyme activity by converting linear into branched poly-N-acetyllactosaminoglycans. Contributes to the post-translational modifications of structural proteins. The polypeptide is Beta-1,3-galactosyl-O-glycosyl-glycoprotein beta-1,6-N-acetylglucosaminyltransferase (Bo17) (Bovine herpesvirus 4 (strain V. test) (BoHV-4)).